The following is a 446-amino-acid chain: Tubulin beta chain (446 aa).

GTP-binding residues include Q11, E69, S138, G142, T143, G144, N204, and N226. E69 provides a ligand contact to Mg(2+). Residues 425–446 (YQEASISEGEEEYPEEVSNEEE) form a disordered region. The span at 432-446 (EGEEEYPEEVSNEEE) shows a compositional bias: acidic residues.

It belongs to the tubulin family. As to quaternary structure, dimer of alpha and beta chains. A typical microtubule is a hollow water-filled tube with an outer diameter of 25 nm and an inner diameter of 15 nM. Alpha-beta heterodimers associate head-to-tail to form protofilaments running lengthwise along the microtubule wall with the beta-tubulin subunit facing the microtubule plus end conferring a structural polarity. Microtubules usually have 13 protofilaments but different protofilament numbers can be found in some organisms and specialized cells. Requires Mg(2+) as cofactor.

The protein resides in the cytoplasm. The protein localises to the cytoskeleton. In terms of biological role, tubulin is the major constituent of microtubules, a cylinder consisting of laterally associated linear protofilaments composed of alpha- and beta-tubulin heterodimers. Microtubules grow by the addition of GTP-tubulin dimers to the microtubule end, where a stabilizing cap forms. Below the cap, tubulin dimers are in GDP-bound state, owing to GTPase activity of alpha-tubulin. The chain is Tubulin beta chain (TUB2) from Blumeria hordei (Barley powdery mildew).